The chain runs to 98 residues: NADH-ubiquinone oxidoreductase chain 4L (98 aa).

The next 3 membrane-spanning stretches (helical) occupy residues 1 to 21, 29 to 49, and 61 to 81; these read MSLVHINILMAFIMSLTGLLM, ALLCLEGMMLSLFVLATLTIL, and IILLVFAACEAAIGLALLVMI.

This sequence belongs to the complex I subunit 4L family. In terms of assembly, core subunit of respiratory chain NADH dehydrogenase (Complex I) which is composed of 45 different subunits.

The protein resides in the mitochondrion inner membrane. It carries out the reaction a ubiquinone + NADH + 5 H(+)(in) = a ubiquinol + NAD(+) + 4 H(+)(out). Core subunit of the mitochondrial membrane respiratory chain NADH dehydrogenase (Complex I) which catalyzes electron transfer from NADH through the respiratory chain, using ubiquinone as an electron acceptor. Part of the enzyme membrane arm which is embedded in the lipid bilayer and involved in proton translocation. In Delphinapterus leucas (Beluga whale), this protein is NADH-ubiquinone oxidoreductase chain 4L (MT-ND4L).